We begin with the raw amino-acid sequence, 301 residues long: MPAIASKQYSDDVSLLVLLLDTNPLFWSTTSITFSQFLSHVLAFLNAVLGLNQLNQVVVIATGYSSCDYIYDSSLTSNHGNFESNGTGMPAIFGSLLKKLEEFVTKDEELSKEEVSEDRIPSCLLSGSLSMALCYIQRVFRSGHLHPQPRILCLQGSPDGPEQYVAVMNSIFSAQRLMVPIDSCYIGVQNSAFLQQASYITGGVHHTPKQLDGLFQYLTTIFATDLHSRGFVQLPKPIGVDFRASCFCHKKTIDMGYICSVCLSIFCEHHKKCSTCGSVFGQSKLDDASSASDKKRKAPST.

A C4-type zinc finger spans residues 259 to 276 (CSVCLSIFCEHHKKCSTC).

It belongs to the TFB4 family. Component of the 7-subunit TFIIH core complex composed of XPB, XPD, TFB1/GTF2H1, GTF2H2/P44, TFB4/GTF2H3, TFB2/GTF2H4 and TFB5/GTF2H5, which is active in NER. The core complex associates with the 3-subunit CDK-activating kinase (CAK) module composed of CYCH1/cyclin H1, CDKD and MAT1/At4g30820 to form the 10-subunit holoenzyme (holo-TFIIH) active in transcription.

It localises to the nucleus. Functionally, component of the general transcription and DNA repair factor IIH (TFIIH) core complex, which is involved in general and transcription-coupled nucleotide excision repair (NER) of damaged DNA and, when complexed to CAK, in RNA transcription by RNA polymerase II. In NER, TFIIH acts by opening DNA around the lesion to allow the excision of the damaged oligonucleotide and its replacement by a new DNA fragment. In transcription, TFIIH has an essential role in transcription initiation. When the pre-initiation complex (PIC) has been established, TFIIH is required for promoter opening and promoter escape. Phosphorylation of the C-terminal tail (CTD) of the largest subunit of RNA polymerase II by the kinase module CAK controls the initiation of transcription. The chain is General transcription and DNA repair factor IIH subunit TFB4 from Arabidopsis thaliana (Mouse-ear cress).